A 177-amino-acid chain; its full sequence is Translation initiation factor IF-3 (177 aa).

It belongs to the IF-3 family. In terms of assembly, monomer.

Its subcellular location is the cytoplasm. IF-3 binds to the 30S ribosomal subunit and shifts the equilibrium between 70S ribosomes and their 50S and 30S subunits in favor of the free subunits, thus enhancing the availability of 30S subunits on which protein synthesis initiation begins. The sequence is that of Translation initiation factor IF-3 from Nitratiruptor sp. (strain SB155-2).